The primary structure comprises 476 residues: Adenosylhomocysteinase (476 aa).

Thr-61, Asp-140, and Glu-200 together coordinate substrate. Residue 201–203 (TTT) participates in NAD(+) binding. The substrate site is built by Lys-230 and Asp-234. Residues Asn-235, 264 to 269 (GYGDVG), Glu-287, Asn-322, 343 to 345 (IGH), and Asn-389 contribute to the NAD(+) site.

It belongs to the adenosylhomocysteinase family. Requires NAD(+) as cofactor.

It localises to the cytoplasm. The catalysed reaction is S-adenosyl-L-homocysteine + H2O = L-homocysteine + adenosine. The protein operates within amino-acid biosynthesis; L-homocysteine biosynthesis; L-homocysteine from S-adenosyl-L-homocysteine: step 1/1. In terms of biological role, may play a key role in the regulation of the intracellular concentration of adenosylhomocysteine. This chain is Adenosylhomocysteinase, found in Acidovorax sp. (strain JS42).